The sequence spans 534 residues: Cytochrome P450 monooxygenase vrtK (534 aa).

Heme is bound at residue cysteine 448.

The protein belongs to the cytochrome P450 family. Heme serves as cofactor.

It functions in the pathway secondary metabolite biosynthesis; terpenoid biosynthesis. Cytochrome P450 monooxygenase; part of the gene cluster that mediates the biosynthesis of viridicatumtoxin, a tetracycline-like fungal meroterpenoid with a unique, fused spirobicyclic ring system. The first step of the pathway is the production of the malonamoyl-CoA starter unit for the polyketide synthase vrtA. The aldolase vrtJ may be involved in the synthesis of the malonamate substrate for malonamoyl-CoA synthetase vrtB. The polyketide synthase vrtA then may utilize the malonamoyl-CoA starter unit, followed by sequential condensation of eight malonyl-CoA units to form the polyketide backbone. The cyclization of the last ring could be mediated by the lactamase-like protein vrtG. The proposed post-PKS tailoring steps are a hydroxylation at C5 catalyzed the cytochrome P450 monooxygenase vrtE, a hydroxylation at C12a catalyzed by VrtH and/or VrtI, and an O-methylation by the O-methyltransferase vrtF. VrtC is then proposed to catalyze the transfer of a geranyl group synthesized by vrtD to the aromatic C ring of the tetracyclic polyketide intermediate of viridicatumtoxin to yield previridicatumtoxin. Finally, the cytochrome P450 monooxygenase vrtK catalyzes the spirocyclization of the geranyl moiety of previridicatumtoxin to afford viridicatumtoxin. This is Cytochrome P450 monooxygenase vrtK from Penicillium aethiopicum.